A 122-amino-acid chain; its full sequence is Small ribosomal subunit protein uS13 (122 aa).

Residues 97 to 122 (PVRGQRTHTNAKTRKGRSRLPIAGKK) form a disordered region.

Belongs to the universal ribosomal protein uS13 family. Part of the 30S ribosomal subunit. Forms a loose heterodimer with protein S19. Forms two bridges to the 50S subunit in the 70S ribosome.

Its function is as follows. Located at the top of the head of the 30S subunit, it contacts several helices of the 16S rRNA. In the 70S ribosome it contacts the 23S rRNA (bridge B1a) and protein L5 of the 50S subunit (bridge B1b), connecting the 2 subunits; these bridges are implicated in subunit movement. Contacts the tRNAs in the A and P-sites. The polypeptide is Small ribosomal subunit protein uS13 (Wolbachia pipientis wMel).